The primary structure comprises 258 residues: Countin-1 (258 aa).

An N-terminal signal peptide occupies residues 1 to 21 (MNKLFSLILALFLVNSAVVSS). In terms of domain architecture, Saposin B-type spans 22 to 106 (LDSCSICVDF…EKISVCKTND (85 aa)). 3 cysteine pairs are disulfide-bonded: Cys-25/Cys-102, Cys-28/Cys-96, and Cys-56/Cys-69. N-linked (GlcNAc...) asparagine glycosylation is found at Asn-121 and Asn-215. The span at 233-248 (AGSFSGSSQSTQTGAA) shows a compositional bias: low complexity. The disordered stretch occupies residues 233–258 (AGSFSGSSQSTQTGAASGSGSGFALF). A compositionally biased stretch (gly residues) spans 249 to 258 (SGSGSGFALF).

The protein belongs to the countin family. In terms of assembly, component of the counting factor (CF) complex, which includes cf60, cf50, cf45-1 and ctnA.

The protein resides in the secreted. In terms of biological role, cell-counting factor that limits the maximum size of the multicellular structure. May down-regulate the expression of gp24, which mediates cell adhesion. The protein is Countin-1 (ctnA) of Dictyostelium discoideum (Social amoeba).